The following is a 714-amino-acid chain: Polyribonucleotide nucleotidyltransferase (714 aa).

Mg(2+) contacts are provided by Asp-493 and Asp-499. Positions 559–618 constitute a KH domain; that stretch reads PRIETTKIPADRIGELIGPGGKNIKAIQAESGADINIEEDGTVHIYAAKQEGLDRALELV. One can recognise an S1 motif domain in the interval 628 to 696; sequence GELYTGKIVS…DKGRVKMSIR (69 aa).

Belongs to the polyribonucleotide nucleotidyltransferase family. Mg(2+) serves as cofactor.

It localises to the cytoplasm. The enzyme catalyses RNA(n+1) + phosphate = RNA(n) + a ribonucleoside 5'-diphosphate. In terms of biological role, involved in mRNA degradation. Catalyzes the phosphorolysis of single-stranded polyribonucleotides processively in the 3'- to 5'-direction. This Akkermansia muciniphila (strain ATCC BAA-835 / DSM 22959 / JCM 33894 / BCRC 81048 / CCUG 64013 / CIP 107961 / Muc) protein is Polyribonucleotide nucleotidyltransferase.